A 406-amino-acid polypeptide reads, in one-letter code: Probable endo-xylogalacturonan hydrolase A (406 aa).

A signal peptide spans 1–18 (MISLNSIFLLSLVGLSRA). The tract at residues 20–49 (PSRSETSPDRTIKPRAACTPTAGGSSSTDD) is disordered. PbH1 repeat units follow at residues 183-213 (TSNAQFTSLTMDATSNSDNLPKNTDAFDIGA), 214-235 (STYVTISSVAITNDDDCVAFKP), 237-257 (ANYVTVENVSCTGSHGISVGS), 266-289 (VQNVYARNITMINSSKAAGIKTYP), 299-320 (VKNATFEDFIVDGCDYAFQIQS), and 368-390 (TCDVTISGFEVKAPSGDAKILCG). The active-site Proton donor is aspartate 228. N-linked (GlcNAc...) asparagine glycosylation is present at asparagine 244. Histidine 251 is an active-site residue. Residues asparagine 273, asparagine 278, and asparagine 301 are each glycosylated (N-linked (GlcNAc...) asparagine).

The protein belongs to the glycosyl hydrolase 28 family.

It localises to the secreted. Pectinolytic enzyme involved in the degradation of xylogalacturonan (xga), a galacturonan backbone heavily substituted with xylose, and which is one important component of the hairy regions of pectin. Activity requires a galacturonic acid backbone substituted with xylose. This chain is Probable endo-xylogalacturonan hydrolase A (xghA), found in Aspergillus flavus (strain ATCC 200026 / FGSC A1120 / IAM 13836 / NRRL 3357 / JCM 12722 / SRRC 167).